A 207-amino-acid chain; its full sequence is Ion-translocating oxidoreductase complex subunit G (207 aa).

The chain crosses the membrane as a helical span at residues 11–31 (GILLGFIALLCTIISAGIYFL). The residue at position 175 (T175) is an FMN phosphoryl threonine.

It belongs to the RnfG family. The complex is composed of six subunits: RnfA, RnfB, RnfC, RnfD, RnfE and RnfG. Requires FMN as cofactor.

The protein resides in the cell inner membrane. Functionally, part of a membrane-bound complex that couples electron transfer with translocation of ions across the membrane. The sequence is that of Ion-translocating oxidoreductase complex subunit G from Haemophilus influenzae (strain PittEE).